We begin with the raw amino-acid sequence, 86 residues long: UPF0437 protein Ava_4254 (86 aa).

This sequence belongs to the UPF0437 family.

The chain is UPF0437 protein Ava_4254 from Trichormus variabilis (strain ATCC 29413 / PCC 7937) (Anabaena variabilis).